A 175-amino-acid polypeptide reads, in one-letter code: Anterior gradient protein 2 homolog (175 aa).

Residues 1-20 (MEKFSVSAILLLVAISGTLA) form the signal peptide. A required to promote cell adhesion region spans residues 21 to 40 (KDTTVKSGAKKDPKDSRPKL). Positions 24-44 (TVKSGAKKDPKDSRPKLPQTL) are disordered. Basic and acidic residues predominate over residues 29-38 (AKKDPKDSRP). Short sequence motifs (homodimer stabilization; interchain) lie at residues 45–54 (SRGWGDQLIW) and 60–67 (EALYRSKT).

This sequence belongs to the AGR family. In terms of assembly, monomer and homodimer. Interacts with LYPD3 and DAG1 (alphaDAG1). Interacts with MUC2; disulfide-linked. As to expression, expressed in lung, skeletal muscle, testis, liver, stomach, colon, small intestine, the goblet cells of the intestine and the mucuous neck cells of the stomach.

The protein localises to the secreted. Its subcellular location is the endoplasmic reticulum. Its function is as follows. Required for MUC2 post-transcriptional synthesis and secretion. May play a role in the production of mucus by intestinal cells. Proto-oncogene that may play a role in cell migration, cell differentiation and cell growth. Promotes cell adhesion. The protein is Anterior gradient protein 2 homolog (Agr2) of Mus musculus (Mouse).